The following is a 238-amino-acid chain: DNA repair protein RAD59 (238 aa).

This sequence belongs to the RAD52 family. Interacts with RAD51 and RAD52.

The protein localises to the nucleus. Functionally, involved in the repair of double-strand breaks in DNA during vegetative growth via recombination and single-strand annealing. Anneals complementary single-stranded DNA. The polypeptide is DNA repair protein RAD59 (RAD59) (Saccharomyces cerevisiae (strain ATCC 204508 / S288c) (Baker's yeast)).